The chain runs to 256 residues: tRNA pseudouridine synthase A (256 aa).

D52 (nucleophile) is an active-site residue. Y111 provides a ligand contact to substrate.

The protein belongs to the tRNA pseudouridine synthase TruA family. In terms of assembly, homodimer.

The catalysed reaction is uridine(38/39/40) in tRNA = pseudouridine(38/39/40) in tRNA. Its function is as follows. Formation of pseudouridine at positions 38, 39 and 40 in the anticodon stem and loop of transfer RNAs. This Paramagnetospirillum magneticum (strain ATCC 700264 / AMB-1) (Magnetospirillum magneticum) protein is tRNA pseudouridine synthase A.